Here is a 302-residue protein sequence, read N- to C-terminus: Quinolinate synthase (302 aa).

2 residues coordinate iminosuccinate: His-24 and Ser-41. Cys-86 lines the [4Fe-4S] cluster pocket. Iminosuccinate contacts are provided by residues 112–114 (YVN) and Ser-129. Residue Cys-173 coordinates [4Fe-4S] cluster. Residues 199–201 (HPE) and Thr-216 contribute to the iminosuccinate site. Residue Cys-259 participates in [4Fe-4S] cluster binding.

It belongs to the quinolinate synthase family. Type 2 subfamily. [4Fe-4S] cluster serves as cofactor.

It is found in the cytoplasm. It carries out the reaction iminosuccinate + dihydroxyacetone phosphate = quinolinate + phosphate + 2 H2O + H(+). The protein operates within cofactor biosynthesis; NAD(+) biosynthesis; quinolinate from iminoaspartate: step 1/1. In terms of biological role, catalyzes the condensation of iminoaspartate with dihydroxyacetone phosphate to form quinolinate. This Thermococcus onnurineus (strain NA1) protein is Quinolinate synthase.